The sequence spans 113 residues: Large ribosomal subunit protein uL24 (113 aa).

Belongs to the universal ribosomal protein uL24 family. Part of the 50S ribosomal subunit.

Its function is as follows. One of two assembly initiator proteins, it binds directly to the 5'-end of the 23S rRNA, where it nucleates assembly of the 50S subunit. Functionally, one of the proteins that surrounds the polypeptide exit tunnel on the outside of the subunit. This chain is Large ribosomal subunit protein uL24, found in Rickettsia prowazekii (strain Madrid E).